The sequence spans 136 residues: Small ribosomal subunit protein uS9 (136 aa).

It belongs to the universal ribosomal protein uS9 family.

The polypeptide is Small ribosomal subunit protein uS9 (Borrelia duttonii (strain Ly)).